Consider the following 438-residue polypeptide: Serine hydroxymethyltransferase (438 aa).

133 to 135 is a (6S)-5,6,7,8-tetrahydrofolate binding site; sequence GHI. Lys-239 bears the N6-(pyridoxal phosphate)lysine mark.

Belongs to the SHMT family. In terms of assembly, homodimer. The cofactor is pyridoxal 5'-phosphate.

It localises to the cytoplasm. The enzyme catalyses 5,10-methylenetetrahydromethanopterin + glycine + H2O = 5,6,7,8-tetrahydromethanopterin + L-serine. It functions in the pathway amino-acid biosynthesis; glycine biosynthesis; glycine from L-serine: step 1/1. Functionally, catalyzes the reversible interconversion of serine and glycine with tetrahydromethanopterin (H4MPT) serving as the one-carbon carrier. Also exhibits a pteridine-independent aldolase activity toward beta-hydroxyamino acids, producing glycine and aldehydes, via a retro-aldol mechanism. The protein is Serine hydroxymethyltransferase of Archaeoglobus fulgidus (strain ATCC 49558 / DSM 4304 / JCM 9628 / NBRC 100126 / VC-16).